A 393-amino-acid polypeptide reads, in one-letter code: Epoxyqueuosine reductase (393 aa).

The Proton donor role is filled by aspartate 154. One can recognise a 4Fe-4S ferredoxin-type domain in the interval 196 to 228 (LPLPVDIPVQEGCHSCVACITSCPTGAIVEPYT). [4Fe-4S] cluster contacts are provided by cysteine 208, cysteine 211, cysteine 214, cysteine 218, cysteine 234, cysteine 261, cysteine 264, and cysteine 268.

This sequence belongs to the QueG family. Monomer. Cob(II)alamin serves as cofactor. Requires [4Fe-4S] cluster as cofactor.

The protein resides in the cytoplasm. It carries out the reaction epoxyqueuosine(34) in tRNA + AH2 = queuosine(34) in tRNA + A + H2O. It functions in the pathway tRNA modification; tRNA-queuosine biosynthesis. Catalyzes the conversion of epoxyqueuosine (oQ) to queuosine (Q), which is a hypermodified base found in the wobble positions of tRNA(Asp), tRNA(Asn), tRNA(His) and tRNA(Tyr). The protein is Epoxyqueuosine reductase of Shewanella oneidensis (strain ATCC 700550 / JCM 31522 / CIP 106686 / LMG 19005 / NCIMB 14063 / MR-1).